The sequence spans 232 residues: Biosynthetic peptidoglycan transglycosylase (232 aa).

The chain crosses the membrane as a helical span at residues 14 to 34 (AAVALVLLYQLWIFAHVLWWI).

Belongs to the glycosyltransferase 51 family.

Its subcellular location is the cell inner membrane. It carries out the reaction [GlcNAc-(1-&gt;4)-Mur2Ac(oyl-L-Ala-gamma-D-Glu-L-Lys-D-Ala-D-Ala)](n)-di-trans,octa-cis-undecaprenyl diphosphate + beta-D-GlcNAc-(1-&gt;4)-Mur2Ac(oyl-L-Ala-gamma-D-Glu-L-Lys-D-Ala-D-Ala)-di-trans,octa-cis-undecaprenyl diphosphate = [GlcNAc-(1-&gt;4)-Mur2Ac(oyl-L-Ala-gamma-D-Glu-L-Lys-D-Ala-D-Ala)](n+1)-di-trans,octa-cis-undecaprenyl diphosphate + di-trans,octa-cis-undecaprenyl diphosphate + H(+). Its pathway is cell wall biogenesis; peptidoglycan biosynthesis. Its function is as follows. Peptidoglycan polymerase that catalyzes glycan chain elongation from lipid-linked precursors. In Thiobacillus denitrificans (strain ATCC 25259 / T1), this protein is Biosynthetic peptidoglycan transglycosylase.